The sequence spans 369 residues: Phospho-N-acetylmuramoyl-pentapeptide-transferase (369 aa).

10 helical membrane-spanning segments follow: residues 30–50 (AAAITSLLITILAGPKLIGYL), 73–93 (LPTMGGTLIIFSVVVSGLLWA), 99–119 (YVWLILLSILWMGTIGFIDDY), 140–160 (VSLGLFIGFYTRFDPAFSVLL), 171–191 (LMIDYGWWYIPVVVFIITAVS), 202–222 (GLAAGTSGIVVFGLGGFAYLT), 239–259 (GGEVAVVSMAIVMACVGFLWF), 266–286 (IFMGDTGSLALGSAIAVIALL), 291–311 (LLLPVLAGTFLLETLSVSLQV), and 346–366 (KIVIRFWIITLLFFLASLMTL).

Belongs to the glycosyltransferase 4 family. MraY subfamily. Mg(2+) is required as a cofactor.

Its subcellular location is the cell inner membrane. It catalyses the reaction UDP-N-acetyl-alpha-D-muramoyl-L-alanyl-gamma-D-glutamyl-meso-2,6-diaminopimeloyl-D-alanyl-D-alanine + di-trans,octa-cis-undecaprenyl phosphate = di-trans,octa-cis-undecaprenyl diphospho-N-acetyl-alpha-D-muramoyl-L-alanyl-D-glutamyl-meso-2,6-diaminopimeloyl-D-alanyl-D-alanine + UMP. The protein operates within cell wall biogenesis; peptidoglycan biosynthesis. Functionally, catalyzes the initial step of the lipid cycle reactions in the biosynthesis of the cell wall peptidoglycan: transfers peptidoglycan precursor phospho-MurNAc-pentapeptide from UDP-MurNAc-pentapeptide onto the lipid carrier undecaprenyl phosphate, yielding undecaprenyl-pyrophosphoryl-MurNAc-pentapeptide, known as lipid I. This Chlorobium phaeobacteroides (strain BS1) protein is Phospho-N-acetylmuramoyl-pentapeptide-transferase.